Here is a 495-residue protein sequence, read N- to C-terminus: NAD(+)--protein-arginine ADP-ribosyltransferase Tre1 (495 aa).

The interval 278-309 (PDLQIKGPTPVKKPEPLQPARQPEKASAPKPV) is disordered. The TR mART core domain occupies 315–495 (MSLREAVGNQ…VTQFILKEIP (181 aa)). The interval 344–495 (RSALLTDDQI…VTQFILKEIP (152 aa)) is ART domain. Catalysis depends on residues Arg406, Ser431, and Glu466.

Belongs to the Arg-specific ADP-ribosyltransferase family.

It is found in the secreted. Its subcellular location is the host cytoplasm. The enzyme catalyses L-arginyl-[protein] + NAD(+) = N(omega)-(ADP-D-ribosyl)-L-arginyl-[protein] + nicotinamide + H(+). Toxic component of a contact-dependent interbacterial competition system (also called effector-immunity systems). Acts by ADP-ribosylating a number of target proteins in target cells; E.coli target proteins include FtsZ, EFTu, RNase E, Fis, YegQ, GuaB and IF2. The sequence is that of NAD(+)--protein-arginine ADP-ribosyltransferase Tre1 from Pseudomonas putida (strain GB-1).